The following is a 245-amino-acid chain: MEMGKMLVVYMTLGYPNVQSFKDFIIGAVENGADILELGIPPKYAKYDGPVIRKSYDKVKGLDIWPLIEDIRKDVGVPIIALTYLEDWVDQLENFLNMIKDVKLDGILFPDLLIDYIDDLDKIDGIIKNKGLKNVIFTSPSVPDLLIHKVSKISDLFLYYGVRPTTGVPIPVSVKQLINRVRNLVENKLIVGFGLSSESDLRDALSAGADGIAIGTVFIEEIERNGVKSAINLVKKFRAILDEYK.

Catalysis depends on proton acceptor residues E37 and D48.

Belongs to the TrpA family. Tetramer of two alpha and two beta chains.

It catalyses the reaction (1S,2R)-1-C-(indol-3-yl)glycerol 3-phosphate + L-serine = D-glyceraldehyde 3-phosphate + L-tryptophan + H2O. The protein operates within amino-acid biosynthesis; L-tryptophan biosynthesis; L-tryptophan from chorismate: step 5/5. Functionally, the alpha subunit is responsible for the aldol cleavage of indoleglycerol phosphate to indole and glyceraldehyde 3-phosphate. This Saccharolobus solfataricus (strain ATCC 35092 / DSM 1617 / JCM 11322 / P2) (Sulfolobus solfataricus) protein is Tryptophan synthase alpha chain.